The chain runs to 160 residues: SsrA-binding protein (160 aa).

The segment at 131 to 160 is disordered; the sequence is KKEYDKRDTEKARDSDREIQRAIRSKGKED.

It belongs to the SmpB family.

Its subcellular location is the cytoplasm. Functionally, required for rescue of stalled ribosomes mediated by trans-translation. Binds to transfer-messenger RNA (tmRNA), required for stable association of tmRNA with ribosomes. tmRNA and SmpB together mimic tRNA shape, replacing the anticodon stem-loop with SmpB. tmRNA is encoded by the ssrA gene; the 2 termini fold to resemble tRNA(Ala) and it encodes a 'tag peptide', a short internal open reading frame. During trans-translation Ala-aminoacylated tmRNA acts like a tRNA, entering the A-site of stalled ribosomes, displacing the stalled mRNA. The ribosome then switches to translate the ORF on the tmRNA; the nascent peptide is terminated with the 'tag peptide' encoded by the tmRNA and targeted for degradation. The ribosome is freed to recommence translation, which seems to be the essential function of trans-translation. This is SsrA-binding protein from Azotobacter vinelandii (strain DJ / ATCC BAA-1303).